Here is a 407-residue protein sequence, read N- to C-terminus: Argininosuccinate synthase (407 aa).

ATP is bound by residues 10 to 18 (AYSGGLDTS) and Ala37. The L-citrulline site is built by Tyr88 and Ser93. Gly118 contributes to the ATP binding site. L-aspartate is bound by residues Thr120, Asn124, and Asp125. Asn124 provides a ligand contact to L-citrulline. Residues Arg128, Ser180, Ser189, Glu265, and Tyr277 each coordinate L-citrulline.

This sequence belongs to the argininosuccinate synthase family. Type 1 subfamily. As to quaternary structure, homotetramer.

It localises to the cytoplasm. The enzyme catalyses L-citrulline + L-aspartate + ATP = 2-(N(omega)-L-arginino)succinate + AMP + diphosphate + H(+). It participates in amino-acid biosynthesis; L-arginine biosynthesis; L-arginine from L-ornithine and carbamoyl phosphate: step 2/3. In Alcanivorax borkumensis (strain ATCC 700651 / DSM 11573 / NCIMB 13689 / SK2), this protein is Argininosuccinate synthase.